Reading from the N-terminus, the 276-residue chain is Type II pantothenate kinase (276 aa).

8–15 (DAGGTLTK) serves as a coordination point for ATP. E76 acts as the Proton acceptor in catalysis. ATP is bound by residues T105, 127-131 (GGTIM), F143, and S230.

Belongs to the type II pantothenate kinase family. In terms of assembly, homodimer.

It is found in the cytoplasm. It carries out the reaction (R)-pantothenate + ATP = (R)-4'-phosphopantothenate + ADP + H(+). The protein operates within cofactor biosynthesis; coenzyme A biosynthesis; CoA from (R)-pantothenate: step 1/5. In terms of biological role, catalyzes the phosphorylation of pantothenate (Pan), the first step in CoA biosynthesis. This Bacillus anthracis protein is Type II pantothenate kinase.